The chain runs to 159 residues: Phosphopantetheine adenylyltransferase (159 aa).

Position 16 (His-16) interacts with ATP. 3 residues coordinate substrate: Lys-40, Met-72, and Arg-86. ATP is bound by residues 87–89 (GLR), Glu-97, and 122–128 (YQYLSAS).

This sequence belongs to the bacterial CoaD family. As to quaternary structure, homohexamer. Mg(2+) is required as a cofactor.

The protein resides in the cytoplasm. It catalyses the reaction (R)-4'-phosphopantetheine + ATP + H(+) = 3'-dephospho-CoA + diphosphate. Its pathway is cofactor biosynthesis; coenzyme A biosynthesis; CoA from (R)-pantothenate: step 4/5. Reversibly transfers an adenylyl group from ATP to 4'-phosphopantetheine, yielding dephospho-CoA (dPCoA) and pyrophosphate. This chain is Phosphopantetheine adenylyltransferase, found in Dehalococcoides mccartyi (strain ATCC BAA-2100 / JCM 16839 / KCTC 5957 / BAV1).